The sequence spans 449 residues: MLNYTGLENKNVLVVGLAKSGYEAAKLLSKLGANVTVNDGKDLSQDAHVKDLESMGISVVSGSHPLTLLDNNPIIVKNPGIPYTVSIIDEAVKRGLKILTEVELSYLISEAPIIAVTGTNGKTTVTSLIGDMFKKSRLTGRLSGNIGYVASKVAQEVKPTDYLVTELSSFQLLGIEKYKPHIAIITNIYSAHLDYHENLENYQNAKKQIYKNQTEEDYLICNYHQRQVIESEELKAKTLYFSTQQEVDGIYIKDGFIIYKGVRIINTEDLVLPGEHNLENILAAVLACILAGVPIKAIIDSLTTFSGIEHRLQYVGTNRTNKYYNDSKATNTLATQFALNSFNQPIIWLCGGLDRGNEFDELIPYMENVRAMVVFGQTKAKFAKLGNSQGKSVIEANNVEDAVDKVQDIIEPNDVVLLSPACASWDQYSTFEERGEKFIERFRAHLPSY.

118–124 (GTNGKTT) is a binding site for ATP.

This sequence belongs to the MurCDEF family.

The protein localises to the cytoplasm. The catalysed reaction is UDP-N-acetyl-alpha-D-muramoyl-L-alanine + D-glutamate + ATP = UDP-N-acetyl-alpha-D-muramoyl-L-alanyl-D-glutamate + ADP + phosphate + H(+). It participates in cell wall biogenesis; peptidoglycan biosynthesis. In terms of biological role, cell wall formation. Catalyzes the addition of glutamate to the nucleotide precursor UDP-N-acetylmuramoyl-L-alanine (UMA). The polypeptide is UDP-N-acetylmuramoylalanine--D-glutamate ligase (Staphylococcus aureus (strain MW2)).